The sequence spans 182 residues: NADH-quinone oxidoreductase subunit I (182 aa).

4Fe-4S ferredoxin-type domains are found at residues 52–82 and 92–121; these read LTRDPDGEERCVACNLCAVACPVGCISLQKA and EFFRINFSRCIFCGLCEEACPTTAIQLTPD. [4Fe-4S] cluster is bound by residues C62, C65, C68, C72, C101, C104, C107, and C111.

The protein belongs to the complex I 23 kDa subunit family. As to quaternary structure, NDH-1 is composed of 13 different subunits. Subunits NuoA, H, J, K, L, M, N constitute the membrane sector of the complex. [4Fe-4S] cluster is required as a cofactor.

The protein resides in the cell inner membrane. It carries out the reaction a quinone + NADH + 5 H(+)(in) = a quinol + NAD(+) + 4 H(+)(out). In terms of biological role, NDH-1 shuttles electrons from NADH, via FMN and iron-sulfur (Fe-S) centers, to quinones in the respiratory chain. The immediate electron acceptor for the enzyme in this species is believed to be ubiquinone. Couples the redox reaction to proton translocation (for every two electrons transferred, four hydrogen ions are translocated across the cytoplasmic membrane), and thus conserves the redox energy in a proton gradient. The chain is NADH-quinone oxidoreductase subunit I from Pseudomonas putida (strain ATCC 47054 / DSM 6125 / CFBP 8728 / NCIMB 11950 / KT2440).